Consider the following 196-residue polypeptide: Superantigen-like protein 11 (196 aa).

Residues 65-167 are sialyl Lewis X-binding; that stretch reads LDVFVVREGS…RVTMKNGDFY (103 aa).

This sequence belongs to the staphylococcal/streptococcal toxin family. In terms of assembly, homodimer (via its C-terminal domain). Interacts with host FCAR and SELPLG (via sialyl Lewis X).

The protein localises to the secreted. Its function is as follows. Secreted protein that plays a role in the inhibition of host immune system. Targets myeloid cells such as monocytes or granulocytes through binding with sialyllactosamine-containing glycoproteins. Prevents initial rolling of neutrophils toward the site of infection by interacting with host SELPLG. Disrupts neutrophil motility by induction of cell adhesion via interacting with glycans but independently of SELPLG. This Staphylococcus aureus protein is Superantigen-like protein 11.